The primary structure comprises 434 residues: Trigger factor (434 aa).

In terms of domain architecture, PPIase FKBP-type spans 160–245; it reads GDKAKINFVG…LNEVQAANLP (86 aa).

Belongs to the FKBP-type PPIase family. Tig subfamily.

Its subcellular location is the cytoplasm. It carries out the reaction [protein]-peptidylproline (omega=180) = [protein]-peptidylproline (omega=0). Involved in protein export. Acts as a chaperone by maintaining the newly synthesized protein in an open conformation. Functions as a peptidyl-prolyl cis-trans isomerase. This chain is Trigger factor, found in Shewanella woodyi (strain ATCC 51908 / MS32).